Here is a 424-residue protein sequence, read N- to C-terminus: Serine--tRNA ligase (424 aa).

230–232 contributes to the L-serine binding site; sequence TAE. Position 261 to 263 (261 to 263) interacts with ATP; it reads RSE. L-serine is bound at residue E284. 348–351 contributes to the ATP binding site; the sequence is EISS. Residue S384 coordinates L-serine.

This sequence belongs to the class-II aminoacyl-tRNA synthetase family. Type-1 seryl-tRNA synthetase subfamily. In terms of assembly, homodimer. The tRNA molecule binds across the dimer.

Its subcellular location is the cytoplasm. The enzyme catalyses tRNA(Ser) + L-serine + ATP = L-seryl-tRNA(Ser) + AMP + diphosphate + H(+). It carries out the reaction tRNA(Sec) + L-serine + ATP = L-seryl-tRNA(Sec) + AMP + diphosphate + H(+). It participates in aminoacyl-tRNA biosynthesis; selenocysteinyl-tRNA(Sec) biosynthesis; L-seryl-tRNA(Sec) from L-serine and tRNA(Sec): step 1/1. Its function is as follows. Catalyzes the attachment of serine to tRNA(Ser). Is also able to aminoacylate tRNA(Sec) with serine, to form the misacylated tRNA L-seryl-tRNA(Sec), which will be further converted into selenocysteinyl-tRNA(Sec). This is Serine--tRNA ligase from Streptococcus pneumoniae serotype 19F (strain G54).